The chain runs to 235 residues: Adenosine 5'-phosphosulfate reductase (235 aa).

Residues Cys121, Cys122, Cys204, and Cys207 each coordinate [4Fe-4S] cluster. Cys230 (nucleophile; cysteine thiosulfonate intermediate) is an active-site residue.

Belongs to the PAPS reductase family. CysH subfamily. The cofactor is [4Fe-4S] cluster.

It is found in the cytoplasm. It catalyses the reaction [thioredoxin]-disulfide + sulfite + AMP + 2 H(+) = adenosine 5'-phosphosulfate + [thioredoxin]-dithiol. It participates in sulfur metabolism; hydrogen sulfide biosynthesis; sulfite from sulfate. In terms of biological role, catalyzes the formation of sulfite from adenosine 5'-phosphosulfate (APS) using thioredoxin as an electron donor. The chain is Adenosine 5'-phosphosulfate reductase from Anoxybacillus flavithermus (strain DSM 21510 / WK1).